A 156-amino-acid chain; its full sequence is Large ribosomal subunit protein eL24 (156 aa).

The span at 110-129 (KESKAKKQETQAAKKAEKAK) shows a compositional bias: basic and acidic residues. The interval 110–156 (KESKAKKQETQAAKKAEKAKNAANPKARVTSKQGAKGAPVKVAAKSR) is disordered. Residues 130–156 (NAANPKARVTSKQGAKGAPVKVAAKSR) are compositionally biased toward low complexity.

This sequence belongs to the eukaryotic ribosomal protein eL24 family. Component of the large ribosomal subunit (LSU). Mature N.crassa ribosomes consist of a small (40S) and a large (60S) subunit. The 40S small subunit contains 1 molecule of ribosomal RNA (18S rRNA) and at least 32 different proteins. The large 60S subunit contains 3 rRNA molecules (26S, 5.8S and 5S rRNA) and at least 42 different proteins.

The protein resides in the cytoplasm. Its function is as follows. Component of the ribosome, a large ribonucleoprotein complex responsible for the synthesis of proteins in the cell. The small ribosomal subunit (SSU) binds messenger RNAs (mRNAs) and translates the encoded message by selecting cognate aminoacyl-transfer RNA (tRNA) molecules. The large subunit (LSU) contains the ribosomal catalytic site termed the peptidyl transferase center (PTC), which catalyzes the formation of peptide bonds, thereby polymerizing the amino acids delivered by tRNAs into a polypeptide chain. The nascent polypeptides leave the ribosome through a tunnel in the LSU and interact with protein factors that function in enzymatic processing, targeting, and the membrane insertion of nascent chains at the exit of the ribosomal tunnel. The protein is Large ribosomal subunit protein eL24 (rpl-24) of Neurospora crassa (strain ATCC 24698 / 74-OR23-1A / CBS 708.71 / DSM 1257 / FGSC 987).